The following is a 199-amino-acid chain: NADH-quinone oxidoreductase subunit C (199 aa).

Belongs to the complex I 30 kDa subunit family. As to quaternary structure, NDH-1 is composed of 14 different subunits. Subunits NuoB, C, D, E, F, and G constitute the peripheral sector of the complex.

Its subcellular location is the cell inner membrane. It catalyses the reaction a quinone + NADH + 5 H(+)(in) = a quinol + NAD(+) + 4 H(+)(out). NDH-1 shuttles electrons from NADH, via FMN and iron-sulfur (Fe-S) centers, to quinones in the respiratory chain. The immediate electron acceptor for the enzyme in this species is believed to be ubiquinone. Couples the redox reaction to proton translocation (for every two electrons transferred, four hydrogen ions are translocated across the cytoplasmic membrane), and thus conserves the redox energy in a proton gradient. The polypeptide is NADH-quinone oxidoreductase subunit C (Polynucleobacter necessarius subsp. necessarius (strain STIR1)).